The primary structure comprises 370 residues: Putative transport protein YdiK (370 aa).

Topologically, residues 1-17 are periplasmic; the sequence is MVNVRQPRDVAQILLSV. The chain crosses the membrane as a helical span at residues 18-38; that stretch reads LFLAIMIVACLWIVQPFILGF. Ala39 is a topological domain (cytoplasmic). The helical transmembrane segment at 40 to 60 threads the bilayer; it reads WAGTVVIATWPVLLRLQKIMF. At 61–65 the chain is on the periplasmic side; it reads GRRSL. The helical transmembrane segment at 66-86 threads the bilayer; that stretch reads AVLVMTLLLVMVFIIPIALLV. At 87-106 the chain is on the cytoplasmic side; the sequence is NSIVDGSGPLIKAISSGDMT. A helical transmembrane segment spans residues 107-127; that stretch reads LPDLAWLNTIPVIGAKLYAGW. At 128–156 the chain is on the periplasmic side; sequence HNLLDMGGTAIMAKVRPYIGTTTTWFVGQ. The chain crosses the membrane as a helical span at residues 157–177; the sequence is AAHIGRFMVHCALMLLFSALL. Residues 178–213 lie on the Cytoplasmic side of the membrane; it reads YWRGEQVAQGIRHFATRLAGVRGDAAVLLAAQAIRA. The chain crosses the membrane as a helical span at residues 214–234; sequence VALGVVVTALVQAVLGGIGLA. The Periplasmic portion of the chain corresponds to 235-248; the sequence is VSGVPYATLLTVLM. A helical membrane pass occupies residues 249-269; it reads ILSCLVQLGPLPVLIPAIIWL. Residues 270–274 lie on the Cytoplasmic side of the membrane; that stretch reads YWTGD. The helical transmembrane segment at 275 to 295 threads the bilayer; it reads TTWGTVLLVWSGVVGTLDNVI. The Periplasmic portion of the chain corresponds to 296-308; that stretch reads RPMLIRMGADLPL. Residues 309-329 form a helical membrane-spanning segment; it reads ILILSGVIGGLIAFGMIGLFI. The Cytoplasmic segment spans residues 330–370; the sequence is GPVLLAVSWRLFAAWVEEVPPPTDQPEEILEELGEIEKPNK.

The protein belongs to the autoinducer-2 exporter (AI-2E) (TC 2.A.86) family.

It localises to the cell inner membrane. In Escherichia coli (strain K12), this protein is Putative transport protein YdiK (ydiK).